Reading from the N-terminus, the 217-residue chain is Ependymin (217 aa).

Positions 1–20 (MHTVKLLCVVFSCLCAIGWA) are cleaved as a signal peptide. N-linked (GlcNAc...) asparagine glycans are attached at residues N73 and N96.

The protein belongs to the ependymin family. Forms disulfide-linked dimers. In terms of processing, binds calcium through the terminal sialic acids. In terms of tissue distribution, EPDs are synthesized in the meninx and secreted in the cerebrospinal fluid.

Its subcellular location is the secreted. In terms of biological role, may play a role in neural plasticity. May be involved during axon regeneration. The chain is Ependymin (epd) from Danio rerio (Zebrafish).